Reading from the N-terminus, the 201-residue chain is Transmembrane 4 L6 family member 18 (201 aa).

Over 1-9 the chain is Cytoplasmic; the sequence is MGSRKCGGC. The chain crosses the membrane as a helical span at residues 10 to 30; it reads LSCLLIPLALWSIIVNILLYF. Residues 31–49 lie on the Extracellular side of the membrane; the sequence is PNGQTSYASSNKLTNYVWY. A helical membrane pass occupies residues 50–70; sequence FEGICFSGIMMLIVTTVLLVL. At 71-93 the chain is on the cytoplasmic side; that stretch reads ENNNNYKCCQSENCSKKYVTLLS. A helical membrane pass occupies residues 94 to 114; it reads IIFSSLGIAFSGYCLVISALG. Topologically, residues 115 to 157 are extracellular; sequence LVQGPYCRTLDGWEYAFEGTAGRFLTDSSIWIQCLEPAHVVEW. The helical transmembrane segment at 158–178 threads the bilayer; sequence NIILFSILITLSGLQVIICLI. The Cytoplasmic segment spans residues 179-201; it reads RVVMQLSKILCGSYSVIFQPGII.

This sequence belongs to the L6 tetraspanin family.

The protein resides in the membrane. The polypeptide is Transmembrane 4 L6 family member 18 (TM4SF18) (Homo sapiens (Human)).